The following is a 765-amino-acid chain: Polyadenylate-binding protein, cytoplasmic and nuclear (765 aa).

The segment covering 1 to 37 (MSADASTTPAADSNVTSTPETSTTPAAPAPEVTAVES) has biased composition (low complexity). The segment at 1–49 (MSADASTTPAADSNVTSTPETSTTPAAPAPEVTAVESTTAPNASQPHSA) is disordered. Polar residues predominate over residues 38 to 48 (TTAPNASQPHS). RRM domains follow at residues 49 to 127 (ASLY…WSQR), 137 to 214 (GNVF…HHIS), 230 to 307 (TNVY…RAQK), and 333 to 470 (VNLY…LAQR). 2 disordered regions span residues 364-427 (VMRD…ADKK) and 619-657 (PGYG…PEEA). The segment covering 377 to 427 (ESDKEKENKEATKENEKESSEAEKAEKTEEKPADSGDEKKEDKESKKADKK) has biased composition (basic and acidic residues). The segment covering 628–637 (VPVQQGQMRP) has biased composition (low complexity). The PABC domain occupies 659–736 (AGGLTAQALS…ALNVYDEYMK (78 aa)). Residues 737–765 (NKGGESEATGEAAKPKEAAKETSTEENKS) form a disordered region. A compositionally biased stretch (basic and acidic residues) spans 749 to 765 (AKPKEAAKETSTEENKS).

It belongs to the polyadenylate-binding protein type-1 family.

Its subcellular location is the cytoplasm. The protein resides in the nucleus. Binds the poly(A) tail of mRNA. Appears to be an important mediator of the multiple roles of the poly(A) tail in mRNA biogenesis, stability and translation. In the nucleus, involved in both mRNA cleavage and polyadenylation. Is also required for efficient mRNA export to the cytoplasm. Acts in concert with a poly(A)-specific nuclease (PAN) to affect poly(A) tail shortening, which may occur concomitantly with either nucleocytoplasmic mRNA transport or translational initiation. In the cytoplasm, stimulates translation initiation and regulates mRNA decay through translation termination-coupled poly(A) shortening, probably mediated by PAN. The protein is Polyadenylate-binding protein, cytoplasmic and nuclear (pab1) of Aspergillus oryzae (strain ATCC 42149 / RIB 40) (Yellow koji mold).